The following is a 211-amino-acid chain: Thioredoxin domain-containing protein 9 homolog (211 aa).

Residues 68–178 form the Thioredoxin domain; sequence YSEIHSEKDF…LEERIARAQV (111 aa). Residues 184-203 are compositionally biased toward polar residues; the sequence is ESSSLKPKSTTQVRRNVRQS. The segment at 184-211 is disordered; sequence ESSSLKPKSTTQVRRNVRQSARSDSDSE.

This Arabidopsis thaliana (Mouse-ear cress) protein is Thioredoxin domain-containing protein 9 homolog.